A 188-amino-acid polypeptide reads, in one-letter code: dCTP deaminase, dUMP-forming (188 aa).

Residues 101 to 106, aspartate 119, 127 to 129, glutamine 148, tyrosine 162, and glutamine 174 each bind dCTP; these read KSSLGR and TLE. Residue glutamate 129 is the Proton donor/acceptor of the active site.

It belongs to the dCTP deaminase family. Homotrimer.

The enzyme catalyses dCTP + 2 H2O = dUMP + NH4(+) + diphosphate. Its pathway is pyrimidine metabolism; dUMP biosynthesis; dUMP from dCTP: step 1/1. In terms of biological role, bifunctional enzyme that catalyzes both the deamination of dCTP to dUTP and the hydrolysis of dUTP to dUMP without releasing the toxic dUTP intermediate. This chain is dCTP deaminase, dUMP-forming, found in Corynebacterium jeikeium (strain K411).